The sequence spans 400 residues: Cysteine desulfurase (400 aa).

Residues 71-72 (GT), asparagine 150, glutamine 178, and 198-200 (SGH) each bind pyridoxal 5'-phosphate. At lysine 201 the chain carries N6-(pyridoxal phosphate)lysine. Residue threonine 236 coordinates pyridoxal 5'-phosphate. The active-site Cysteine persulfide intermediate is the cysteine 324. Cysteine 324 is a [2Fe-2S] cluster binding site.

This sequence belongs to the class-V pyridoxal-phosphate-dependent aminotransferase family. NifS/IscS subfamily. As to quaternary structure, homodimer. The cofactor is pyridoxal 5'-phosphate.

It carries out the reaction (sulfur carrier)-H + L-cysteine = (sulfur carrier)-SH + L-alanine. Catalyzes the removal of elemental sulfur atoms from cysteine to produce alanine. Seems to participate in the biosynthesis of the nitrogenase metalloclusters by providing the inorganic sulfur required for the Fe-S core formation. The polypeptide is Cysteine desulfurase (Nostoc sp. (strain PCC 7120 / SAG 25.82 / UTEX 2576)).